The chain runs to 590 residues: MSGDYEDDLCRRALILVSDLCARVRDADTNDRCQEFNDRIRGYPRGPDADISVSLLSVIVTFCGIVLLGVSLFVSWKLCWVPWRDKGGSAVGGGPLRKDLGPGVGLAGLVGGGGHHLAAGLGGHPLLGGPHHHAHAAHHPPFAELLEPGSLGGSDTPEPSYLDMDSYPEAAAAAVAAGVKPSQTSPELPSEGGAGSGLLLLPPSGGGLPSAQSHQQVTSLAPTTRYPALPRPLTQQTLTSQPDPSSEERPPALPLPLPGGEEKAKLIGQIKPELYQGTGPGGRRSGGGPGSGEAGTGAPCGRISFALRYLYGSDQLVVRILQALDLPAKDSNGFSDPYVKIYLLPDRKKKFQTKVHRKTLNPVFNETFQFSVPLAELAQRKLHFSVYDFDRFSRHDLIGQVVLDNLLELAEQPPDRPLWRDIVEGGSEKADLGELNFSLCYLPTAGRLTVTIIKASNLKAMDLTGFSDPYVKASLISEGRRLKKRKTSIKKNTLNPTYNEALVFDVAPESVENVGLSIAVVDYDCIGHNEVIGVCRVGPDAADPHGREHWAEMLANPRKPVEHWHQLVEEKTVTSFTKGSKGLSEKENSE.

Residues 1–54 (MSGDYEDDLCRRALILVSDLCARVRDADTNDRCQEFNDRIRGYPRGPDADISVS) are Vesicular-facing. Positions 10–34 (CRRALILVSDLCARVRDADTNDRCQ) are cysteine motif. A helical membrane pass occupies residues 55 to 75 (LLSVIVTFCGIVLLGVSLFVS). Residues 76–590 (WKLCWVPWRD…KGLSEKENSE (515 aa)) lie on the Cytoplasmic side of the membrane. Disordered stretches follow at residues 143 to 220 (AELL…VTSL), 234 to 260 (TQQT…LPGG), and 273 to 295 (ELYQ…GEAG). Residues 185–203 (SPELPSEGGAGSGLLLLPP) are compositionally biased toward low complexity. The span at 234 to 243 (TQQTLTSQPD) shows a compositional bias: polar residues. A compositionally biased stretch (gly residues) spans 278 to 295 (TGPGGRRSGGGPGSGEAG). Arg-284 is subject to Omega-N-methylarginine. 2 C2 domains span residues 299-420 (PCGR…PLWR) and 431-565 (DLGE…EHWH). Ca(2+) is bound by residues Asp-330, Asp-336, Asp-388, Phe-389, Asp-390, Ser-393, Asp-396, Asp-462, Asp-468, Asp-522, and Asp-524.

Belongs to the synaptotagmin family. In terms of assembly, homodimer; disulfide-linked via the cysteine motif. Can also form heterodimers with SYT6, SYT9 and SYT10. It depends on Ca(2+) as a cofactor. As to expression, expressed in melanocytes.

It is found in the cell membrane. The protein localises to the cytoplasmic vesicle. The protein resides in the secretory vesicle membrane. In terms of biological role, ca(2+) sensor involved in Ca(2+)-dependent exocytosis of secretory vesicles through Ca(2+) and phospholipid binding to the C2 domain. Ca(2+) induces binding of the C2-domains to phospholipid membranes and to assembled SNARE-complexes; both actions contribute to triggering exocytosis. Plays a role in dendrite formation by melanocytes. This is Synaptotagmin-3 (SYT3) from Homo sapiens (Human).